Consider the following 247-residue polypeptide: Sugar fermentation stimulation protein homolog (247 aa).

This sequence belongs to the SfsA family.

The sequence is that of Sugar fermentation stimulation protein homolog from Methylorubrum populi (strain ATCC BAA-705 / NCIMB 13946 / BJ001) (Methylobacterium populi).